The following is a 220-amino-acid chain: Small ribosomal subunit protein eS8 (220 aa).

Disordered regions lie at residues 1-41 (MGIS…LSSN) and 131-151 (AKKD…KKSN). Positions 8-26 (MHKRRATGGKQKAWRKKRK) are enriched in basic residues.

It belongs to the eukaryotic ribosomal protein eS8 family.

In Oryza sativa subsp. japonica (Rice), this protein is Small ribosomal subunit protein eS8 (RPS8).